A 253-amino-acid polypeptide reads, in one-letter code: Bacitracin export ATP-binding protein BceA (253 aa).

In terms of domain architecture, ABC transporter spans 4–243; sequence LEATNIHKSY…TFFKDIMKTQ (240 aa). 40 to 47 contributes to the ATP binding site; the sequence is GASGSGKT.

Belongs to the ABC transporter superfamily. In terms of assembly, the complex is composed of two ATP-binding proteins (BceA) and two transmembrane proteins (BceB).

Functionally, part of the ABC transporter complex BceAB (TC 3.A.1.123.5) involved in bacitracin export. Responsible for energy coupling to the transport system. The chain is Bacitracin export ATP-binding protein BceA (bceA) from Halalkalibacterium halodurans (strain ATCC BAA-125 / DSM 18197 / FERM 7344 / JCM 9153 / C-125) (Bacillus halodurans).